The following is a 275-amino-acid chain: MNYSNPTQLQAAILDWAGTVVDFGSFAPTQIFVEAFAEFDVQVSIEEARGPMGMGKWDHIRTLCDVPEIAERYRKVFGRTPTDDDVTDIYNRFMPLQIEKIAVHSALIPGALDTLTGLRQDGLKIGSCSGYPKVVMDKVVELAAQNGYVADHVVATDETPNGRPWPAQALANVIALGIDDVAACVKVDDTVPGILEGRRAGMWTVALVCSGNALGLTWEGYQALSAEQLESERKRIHALFAGSRPHYLIDTINELPEVVADINRRLAKGEMPQAF.

Catalysis depends on aspartate 15, which acts as the Nucleophile. Residues aspartate 15 and alanine 17 each contribute to the Mg(2+) site. The active-site Schiff-base intermediate with substrate is lysine 56. Aspartate 189 lines the Mg(2+) pocket.

The protein belongs to the HAD-like hydrolase superfamily. PhnX family. As to quaternary structure, homodimer. Mg(2+) serves as cofactor.

The enzyme catalyses phosphonoacetaldehyde + H2O = acetaldehyde + phosphate + H(+). Involved in phosphonate degradation. This chain is Phosphonoacetaldehyde hydrolase, found in Pseudomonas putida (strain W619).